The primary structure comprises 314 residues: Vacuolar membrane protein EC1118_1N9_3125g (314 aa).

Residues 32–60 (KPTSSVVSETSSKSLPSLTSSAFSTSSGA) are disordered. Residues 93-113 (VYIAVGAVIGAIFISILIWWL) form a helical membrane-spanning segment. A phosphoserine mark is found at S148, S254, and S274. Positions 240–309 (EERKLNLNRP…PSMFLDDVLN (70 aa)) are disordered. Residues 254–269 (SPERKEKKINSMEGYH) show a composition bias toward basic and acidic residues.

It belongs to the PRM5 family.

It is found in the vacuole membrane. The polypeptide is Vacuolar membrane protein EC1118_1N9_3125g (Saccharomyces cerevisiae (strain Lalvin EC1118 / Prise de mousse) (Baker's yeast)).